The chain runs to 262 residues: Type III pantothenate kinase (262 aa).

9–16 (DAGNSRIK) is an ATP binding site. Substrate-binding positions include Tyr-96 and 103–106 (GSDR). The active-site Proton acceptor is the Asp-105. Thr-129 is an ATP binding site. Position 189 (Thr-189) interacts with substrate.

This sequence belongs to the type III pantothenate kinase family. As to quaternary structure, homodimer. The cofactor is NH4(+). Requires K(+) as cofactor.

The protein resides in the cytoplasm. It carries out the reaction (R)-pantothenate + ATP = (R)-4'-phosphopantothenate + ADP + H(+). Its pathway is cofactor biosynthesis; coenzyme A biosynthesis; CoA from (R)-pantothenate: step 1/5. Its function is as follows. Catalyzes the phosphorylation of pantothenate (Pan), the first step in CoA biosynthesis. The sequence is that of Type III pantothenate kinase from Burkholderia multivorans (strain ATCC 17616 / 249).